Here is a 341-residue protein sequence, read N- to C-terminus: S-adenosylmethionine:tRNA ribosyltransferase-isomerase (341 aa).

Belongs to the QueA family. As to quaternary structure, monomer.

The protein resides in the cytoplasm. The catalysed reaction is 7-aminomethyl-7-carbaguanosine(34) in tRNA + S-adenosyl-L-methionine = epoxyqueuosine(34) in tRNA + adenine + L-methionine + 2 H(+). It participates in tRNA modification; tRNA-queuosine biosynthesis. In terms of biological role, transfers and isomerizes the ribose moiety from AdoMet to the 7-aminomethyl group of 7-deazaguanine (preQ1-tRNA) to give epoxyqueuosine (oQ-tRNA). This Pelodictyon phaeoclathratiforme (strain DSM 5477 / BU-1) protein is S-adenosylmethionine:tRNA ribosyltransferase-isomerase.